The primary structure comprises 123 residues: Succinate dehydrogenase hydrophobic membrane anchor subunit (123 aa).

At 1 to 13 (MAETEKMKYGSLN) the chain is on the cytoplasmic side. The helical transmembrane segment at 14–34 (RFAQAVTGLFLLFFLGVHLYV) threads the bilayer. The Extracellular portion of the chain corresponds to 35-59 (AHIDFGHPVAFFSSVINQLHNPWWL). The chain crosses the membrane as a helical span at residues 60–81 (AFFLIFVYIITYHGINGLNHIV). Histidine 72 contributes to the heme binding site. Topologically, residues 82-91 (ADTSISEKAK) are cytoplasmic. The helical transmembrane segment at 92 to 116 (RNIGIALMVIYVITIIYGTILALLV) threads the bilayer.

As to quaternary structure, part of an enzyme complex containing four subunits: a flavoprotein, an iron-sulfur protein, plus two membrane-anchoring proteins, SdhC and SdhD. It depends on heme as a cofactor.

The protein resides in the cell membrane. Its pathway is carbohydrate metabolism; tricarboxylic acid cycle. Membrane-anchoring subunit of succinate dehydrogenase (SDH). This is Succinate dehydrogenase hydrophobic membrane anchor subunit (sdhD) from Thermoplasma acidophilum (strain ATCC 25905 / DSM 1728 / JCM 9062 / NBRC 15155 / AMRC-C165).